Here is a 239-residue protein sequence, read N- to C-terminus: Probable intron-encoded endonuclease I-ZbiI (239 aa).

Belongs to the LAGLIDADG endonuclease family.

The protein localises to the mitochondrion. Endonuclease involved in mitochondrial 21S rRNA gene intron homing. This chain is Probable intron-encoded endonuclease I-ZbiI, found in Zygosaccharomyces bisporus.